A 376-amino-acid chain; its full sequence is Polar flagellin A (376 aa).

Coiled-coil stretches lie at residues 103–128 and 310–338; these read SNSK…RIAE and FQNR…IKDT.

The protein belongs to the bacterial flagellin family. In terms of assembly, heteromer of multiple flagellin subunits including FlaA, FlaB/D, FlaC, FlaE and FlaF.

The protein resides in the secreted. It localises to the bacterial flagellum. Functionally, flagellin is the subunit protein which polymerizes to form the filaments of bacterial flagella. FlaA is not essential for polar flagellar synthesis and swimming motility. Homomer of FlaA is able to form a functional filament. This chain is Polar flagellin A (flaA), found in Vibrio parahaemolyticus serotype O3:K6 (strain RIMD 2210633).